The sequence spans 476 residues: Cysteine--tRNA ligase (476 aa).

Cysteine 28 serves as a coordination point for Zn(2+). A 'HIGH' region motif is present at residues proline 30–histidine 40. The Zn(2+) site is built by cysteine 208, histidine 233, and glutamate 237. A 'KMSKS' region motif is present at residues lysine 265 to serine 269. Lysine 268 lines the ATP pocket.

It belongs to the class-I aminoacyl-tRNA synthetase family. The cofactor is Zn(2+).

The protein resides in the cytoplasm. It carries out the reaction tRNA(Cys) + L-cysteine + ATP = L-cysteinyl-tRNA(Cys) + AMP + diphosphate. This Methanococcus maripaludis (strain C7 / ATCC BAA-1331) protein is Cysteine--tRNA ligase.